A 574-amino-acid chain; its full sequence is MRFSQFYAPTLKEAPADAEVPSQELLTRAGFIRKIAAGVYTYLPLGRRVLLKIEKIVREEMDNIGANEILMPIIQPAELWKQSGRWEDYGPEMMKLKDRHGRDFTLGPTHEELVTFLVQNELNSYKQLPITLYQMANKYRDEIRPRFGVLRAREFIMKDGYSFHSDWESLDETYKAHRKAYSNIMERIGLKYAVVEASSGAIGGNESHEFVAFADTGESNVLFCECGYAGNDERVPYTGEIIYDNEELKGMEKVYTPNVKTAQDVADFLGVPVRKIVKTLIYKGRNGYFMALVPGDRELNEEKLKNFLNDQSLAFATPDDILKDFGVPIGFLGPVGVKGIKVIADHLVKGMKNFVVGGMEKDYHFVNVNVDRDFKVDELADLIVTREGDPCPVCGKPLNAKKGIELGHIFKLGTKYSEAMGSKYMDKDGQLKPFIMGCYGWGVSRTLGAIVEQLHDEKGIIWPLSVAPFAVVITPVSNNENLMKFSEELYNFLVEKGEEVLLDDRNISPGMKFNDADLIGIPFRVTVGKALSEGMVEIKWRTGQQFKVKATLEEIYEFLQKSKQEYDPHKRVEK.

It belongs to the class-II aminoacyl-tRNA synthetase family. ProS type 1 subfamily. In terms of assembly, homodimer.

The protein resides in the cytoplasm. The enzyme catalyses tRNA(Pro) + L-proline + ATP = L-prolyl-tRNA(Pro) + AMP + diphosphate. Catalyzes the attachment of proline to tRNA(Pro) in a two-step reaction: proline is first activated by ATP to form Pro-AMP and then transferred to the acceptor end of tRNA(Pro). As ProRS can inadvertently accommodate and process non-cognate amino acids such as alanine and cysteine, to avoid such errors it has two additional distinct editing activities against alanine. One activity is designated as 'pretransfer' editing and involves the tRNA(Pro)-independent hydrolysis of activated Ala-AMP. The other activity is designated 'posttransfer' editing and involves deacylation of mischarged Ala-tRNA(Pro). The misacylated Cys-tRNA(Pro) is not edited by ProRS. This chain is Proline--tRNA ligase, found in Fervidobacterium nodosum (strain ATCC 35602 / DSM 5306 / Rt17-B1).